The primary structure comprises 389 residues: S-adenosylmethionine synthase (389 aa).

His17 is a binding site for ATP. Asp19 is a Mg(2+) binding site. Glu45 is a binding site for K(+). Glu58 and Gln101 together coordinate L-methionine. Positions 101-111 are flexible loop; it reads QSPDIAQGVNP. Residues 168-170, 234-235, Asp243, 249-250, and Lys270 each bind ATP; these read DGK, RF, and RK. Asp243 serves as a coordination point for L-methionine. Lys274 serves as a coordination point for L-methionine.

Belongs to the AdoMet synthase family. As to quaternary structure, homotetramer; dimer of dimers. It depends on Mg(2+) as a cofactor. Requires K(+) as cofactor.

The protein localises to the cytoplasm. It carries out the reaction L-methionine + ATP + H2O = S-adenosyl-L-methionine + phosphate + diphosphate. Its pathway is amino-acid biosynthesis; S-adenosyl-L-methionine biosynthesis; S-adenosyl-L-methionine from L-methionine: step 1/1. In terms of biological role, catalyzes the formation of S-adenosylmethionine (AdoMet) from methionine and ATP. The overall synthetic reaction is composed of two sequential steps, AdoMet formation and the subsequent tripolyphosphate hydrolysis which occurs prior to release of AdoMet from the enzyme. The chain is S-adenosylmethionine synthase from Syntrophobacter fumaroxidans (strain DSM 10017 / MPOB).